The sequence spans 515 residues: 2-isopropylmalate synthase (515 aa).

Residues 5 to 267 (VIIFDTTLRD…DTRINTQEIH (263 aa)) form the Pyruvate carboxyltransferase domain. 4 residues coordinate Mn(2+): D14, H202, H204, and N238. Positions 392–515 (VLDKLSAHST…VADIKNHKHH (124 aa)) are regulatory domain.

The protein belongs to the alpha-IPM synthase/homocitrate synthase family. LeuA type 1 subfamily. In terms of assembly, homodimer. Requires Mn(2+) as cofactor.

The protein localises to the cytoplasm. The enzyme catalyses 3-methyl-2-oxobutanoate + acetyl-CoA + H2O = (2S)-2-isopropylmalate + CoA + H(+). It functions in the pathway amino-acid biosynthesis; L-leucine biosynthesis; L-leucine from 3-methyl-2-oxobutanoate: step 1/4. In terms of biological role, catalyzes the condensation of the acetyl group of acetyl-CoA with 3-methyl-2-oxobutanoate (2-ketoisovalerate) to form 3-carboxy-3-hydroxy-4-methylpentanoate (2-isopropylmalate). This Haemophilus influenzae (strain PittEE) protein is 2-isopropylmalate synthase.